We begin with the raw amino-acid sequence, 714 residues long: ATP-dependent RNA helicase MSS116, mitochondrial (714 aa).

The transit peptide at 1-37 directs the protein to the mitochondrion; sequence MSWVRSVAIRTALCRQVRSRYQSYGSTRLFSSSLRSW. Positions 74–102 match the Q motif motif; sequence SLEASRKFDKSIFRGLYNSKMKNMTVVQQ. Positions 106 to 296 constitute a Helicase ATP-binding domain; it reads MPMMDTKTGV…HETIGKEYEY (191 aa). 119–126 serves as a coordination point for ATP; it reads AKTGTGKT. Residues 234–237 carry the DEAD box motif; it reads DEAD. The 164-residue stretch at 335–498 folds into the Helicase C-terminal domain; that stretch reads HINDKYFKAI…TSPDHFQRLG (164 aa). The disordered stretch occupies residues 581–714; that stretch reads SSNDRKSKRT…TYGRRDDSDE (134 aa). 3 stretches are compositionally biased toward basic and acidic residues: residues 619–640, 656–671, and 679–697; these read RSFDRNDRSYGNDRSYSNDRKS, YGDKSYGDKSYGDKSY, and SNDRSFSRGNDRGGYEKRN.

It belongs to the DEAD box helicase family. DDX18/HAS1 subfamily.

Its subcellular location is the mitochondrion matrix. The enzyme catalyses ATP + H2O = ADP + phosphate + H(+). Functionally, ATP-dependent RNA helicase required for mitochondrial splicing of group I and II introns. Also required for efficient mitochondrial translation. The polypeptide is ATP-dependent RNA helicase MSS116, mitochondrial (MSS116) (Meyerozyma guilliermondii (strain ATCC 6260 / CBS 566 / DSM 6381 / JCM 1539 / NBRC 10279 / NRRL Y-324) (Yeast)).